Here is a 404-residue protein sequence, read N- to C-terminus: Coenzyme F420H(2) oxidase (404 aa).

Residues His-83, Glu-85, Asp-87, His-88, His-151, Asp-170, and His-233 each coordinate Fe cation. Residues 259-399 (VTVIYDTMHG…ACFEAGRKLA (141 aa)) form the Flavodoxin-like domain. FMN is bound by residues 265-270 (TMHGST), 317-320 (TIYD), and 351-356 (SMGGNG).

It in the N-terminal section; belongs to the zinc metallo-hydrolase group 3 family. Homodimer. Homotetramer. The tetramer is composed of two functional dimers. FMN serves as cofactor. Requires Fe cation as cofactor.

The catalysed reaction is 2 reduced coenzyme F420-(gamma-L-Glu)(n) + O2 = 2 oxidized coenzyme F420-(gamma-L-Glu)(n) + 2 H2O + 2 H(+). Functionally, catalyzes the oxidation of F420H(2) with O(2). May be involved in O(2) detoxification, reducing the intracellular O(2) concentration to a level allowing growth at the expense of methane formation. The protein is Coenzyme F420H(2) oxidase of Methanothermobacter marburgensis (strain ATCC BAA-927 / DSM 2133 / JCM 14651 / NBRC 100331 / OCM 82 / Marburg) (Methanobacterium thermoautotrophicum).